The following is a 417-amino-acid chain: MLEQMGIAAKQASYKLAQLSSREKNRVLEKIADELEAQSEIILNANAQDVADARANGLGEAMLDRLALTPARLKGIADDVRQVCNLADPVGQVIDGSVLDSGLRLERRRVPLGVIGVIYEARPNVTVDVASLCLKTGNAVILRGGKETCRTNAATVAVIQDALKSCGLPAGAVQAIDNPDRALVSEMLRMDKYIDMLIPRGGAGLHKLCREQSTIPVITGGIGVCHIYVDESVEIAEALKVIVNAKTQRPSTCNTVETLLVNKNIADSFLPALSKQMAESGVTLHADAAALAQLQAGPAKVVAVKAEEYDDEFLSLDLNVKIVSDLDDAIAHIREHGTQHSDAILTRDMRNAQRFVNEVDSSAVYVNASTRFTDGGQFGLGAEVAVSTQKLHARGPMGLEALTTYKWIGIGDYTIRA.

Belongs to the gamma-glutamyl phosphate reductase family.

It localises to the cytoplasm. It catalyses the reaction L-glutamate 5-semialdehyde + phosphate + NADP(+) = L-glutamyl 5-phosphate + NADPH + H(+). Its pathway is amino-acid biosynthesis; L-proline biosynthesis; L-glutamate 5-semialdehyde from L-glutamate: step 2/2. Catalyzes the NADPH-dependent reduction of L-glutamate 5-phosphate into L-glutamate 5-semialdehyde and phosphate. The product spontaneously undergoes cyclization to form 1-pyrroline-5-carboxylate. This is Gamma-glutamyl phosphate reductase from Escherichia coli O8 (strain IAI1).